The sequence spans 332 residues: 5-dehydro-2-deoxygluconokinase (332 aa).

Belongs to the carbohydrate kinase PfkB family.

It catalyses the reaction 5-dehydro-2-deoxy-D-gluconate + ATP = 6-phospho-5-dehydro-2-deoxy-D-gluconate + ADP + H(+). Its pathway is polyol metabolism; myo-inositol degradation into acetyl-CoA; acetyl-CoA from myo-inositol: step 5/7. Functionally, catalyzes the phosphorylation of 5-dehydro-2-deoxy-D-gluconate (2-deoxy-5-keto-D-gluconate or DKG) to 6-phospho-5-dehydro-2-deoxy-D-gluconate (DKGP). This Bacillus thuringiensis subsp. konkukian (strain 97-27) protein is 5-dehydro-2-deoxygluconokinase.